The following is a 291-amino-acid chain: 3-hydroxy-5-phosphonooxypentane-2,4-dione thiolase (291 aa).

The active-site Schiff-base intermediate with substrate is Lys-203.

The protein belongs to the DeoC/FbaB aldolase family. As to quaternary structure, homodecamer.

Its subcellular location is the cytoplasm. It carries out the reaction dihydroxyacetone phosphate + acetyl-CoA = 3-hydroxy-2,4-dioxopentyl phosphate + CoA. Involved in the degradation of phospho-AI-2, thereby terminating induction of the lsr operon and closing the AI-2 signaling cycle. Catalyzes the transfer of an acetyl moiety from 3-hydroxy-5-phosphonooxypentane-2,4-dione to CoA to form glycerone phosphate and acetyl-CoA. This chain is 3-hydroxy-5-phosphonooxypentane-2,4-dione thiolase, found in Escherichia coli (strain K12 / DH10B).